The following is a 469-amino-acid chain: 3-isopropylmalate dehydratase large subunit (469 aa).

The [4Fe-4S] cluster site is built by cysteine 347, cysteine 407, and cysteine 410.

The protein belongs to the aconitase/IPM isomerase family. LeuC type 1 subfamily. As to quaternary structure, heterodimer of LeuC and LeuD. [4Fe-4S] cluster serves as cofactor.

The enzyme catalyses (2R,3S)-3-isopropylmalate = (2S)-2-isopropylmalate. It functions in the pathway amino-acid biosynthesis; L-leucine biosynthesis; L-leucine from 3-methyl-2-oxobutanoate: step 2/4. Its function is as follows. Catalyzes the isomerization between 2-isopropylmalate and 3-isopropylmalate, via the formation of 2-isopropylmaleate. The sequence is that of 3-isopropylmalate dehydratase large subunit from Prochlorococcus marinus (strain NATL2A).